The sequence spans 360 residues: Bifunctional protein FolD 4, chloroplastic (360 aa).

The transit peptide at Met1–Ser51 directs the protein to the chloroplast. An N-acetylserine modification is found at Ser52.

This sequence belongs to the tetrahydrofolate dehydrogenase/cyclohydrolase family. In terms of assembly, homodimer.

The protein resides in the plastid. It localises to the chloroplast. It carries out the reaction (6R)-5,10-methylene-5,6,7,8-tetrahydrofolate + NADP(+) = (6R)-5,10-methenyltetrahydrofolate + NADPH. The catalysed reaction is (6R)-5,10-methenyltetrahydrofolate + H2O = (6R)-10-formyltetrahydrofolate + H(+). Its pathway is one-carbon metabolism; tetrahydrofolate interconversion. Its function is as follows. Catalyzes the oxidation of 5,10-methylenetetrahydrofolate to 5,10-methenyltetrahydrofolate and then the hydrolysis of 5,10-methenyltetrahydrofolate to 10-formyltetrahydrofolate. This Arabidopsis thaliana (Mouse-ear cress) protein is Bifunctional protein FolD 4, chloroplastic (FOLD4).